The primary structure comprises 406 residues: NADH-quinone oxidoreductase subunit D (406 aa).

The protein belongs to the complex I 49 kDa subunit family. In terms of assembly, NDH-1 is composed of 14 different subunits. Subunits NuoB, C, D, E, F, and G constitute the peripheral sector of the complex.

It is found in the cell inner membrane. The catalysed reaction is a quinone + NADH + 5 H(+)(in) = a quinol + NAD(+) + 4 H(+)(out). NDH-1 shuttles electrons from NADH, via FMN and iron-sulfur (Fe-S) centers, to quinones in the respiratory chain. The immediate electron acceptor for the enzyme in this species is believed to be ubiquinone. Couples the redox reaction to proton translocation (for every two electrons transferred, four hydrogen ions are translocated across the cytoplasmic membrane), and thus conserves the redox energy in a proton gradient. The chain is NADH-quinone oxidoreductase subunit D from Acidiphilium cryptum (strain JF-5).